The primary structure comprises 439 residues: Methionine aminopeptidase 2-2 (439 aa).

A disordered region spans residues 1 to 90; the sequence is MAAQTTEKLD…RVPVSNLFPN (90 aa). The span at 28 to 41 shows a compositional bias: acidic residues; that stretch reads EAEEDSDDAQDEGA. A compositionally biased stretch (basic residues) spans 56–72; sequence KKKKKKKPKKKSKKKGG. H196 is a binding site for substrate. Residues D216, D227, and H296 each contribute to the a divalent metal cation site. H304 contacts substrate. A divalent metal cation-binding residues include E329 and E424.

It belongs to the peptidase M24A family. Methionine aminopeptidase eukaryotic type 2 subfamily. Co(2+) serves as cofactor. Requires Zn(2+) as cofactor. It depends on Mn(2+) as a cofactor. Fe(2+) is required as a cofactor.

It localises to the cytoplasm. It catalyses the reaction Release of N-terminal amino acids, preferentially methionine, from peptides and arylamides.. Cotranslationally removes the N-terminal methionine from nascent proteins. The N-terminal methionine is often cleaved when the second residue in the primary sequence is small and uncharged (Met-Ala-, Cys, Gly, Pro, Ser, Thr, or Val). This Penicillium rubens (strain ATCC 28089 / DSM 1075 / NRRL 1951 / Wisconsin 54-1255) (Penicillium chrysogenum) protein is Methionine aminopeptidase 2-2.